A 446-amino-acid polypeptide reads, in one-letter code: Na(+)-translocating NADH-quinone reductase subunit A (446 aa).

Belongs to the NqrA family. Composed of six subunits; NqrA, NqrB, NqrC, NqrD, NqrE and NqrF.

It carries out the reaction a ubiquinone + n Na(+)(in) + NADH + H(+) = a ubiquinol + n Na(+)(out) + NAD(+). Its function is as follows. NQR complex catalyzes the reduction of ubiquinone-1 to ubiquinol by two successive reactions, coupled with the transport of Na(+) ions from the cytoplasm to the periplasm. NqrA to NqrE are probably involved in the second step, the conversion of ubisemiquinone to ubiquinol. The chain is Na(+)-translocating NADH-quinone reductase subunit A from Psychromonas ingrahamii (strain DSM 17664 / CCUG 51855 / 37).